Reading from the N-terminus, the 119-residue chain is Chorion class B protein M2807 (119 aa).

A left arm region spans residues 1-11 (GGLGGGCGRGF). The segment at 12 to 80 (SGGGLPVATA…GNGAVGITRE (69 aa)) is central domain. A right arm (Gly-rich tandem repeats) region spans residues 81 to 119 (GGLGYGAGYGDGYGLGYGGYGGGYGLGYGGYGGCGCGCG).

Belongs to the chorion protein family.

Functionally, this protein is one of many from the eggshell of the silk moth. This chain is Chorion class B protein M2807, found in Bombyx mori (Silk moth).